The primary structure comprises 335 residues: Nucleoid-associated protein YejK (335 aa).

Belongs to the YejK family.

It localises to the cytoplasm. The protein localises to the nucleoid. This Escherichia coli (strain K12 / MC4100 / BW2952) protein is Nucleoid-associated protein YejK.